The primary structure comprises 169 residues: Transmembrane protein 89 (169 aa).

A signal peptide spans 1-22 (MLYTLLLVPSLFLLVMPVPSQG). Topologically, residues 23–75 (WSRPLWYQVGLDLQPWGCQPNSPDIWGCQPNSLDSCKNSLGCPGYWLGLGGNR) are extracellular. A helical membrane pass occupies residues 76 to 96 (IYPVAGVTITTTMLLVVSRVI). The Cytoplasmic segment spans residues 97-169 (VHRWRAKVAK…QIKGSPPQSG (73 aa)).

It localises to the membrane. This Mus musculus (Mouse) protein is Transmembrane protein 89 (Tmem89).